The primary structure comprises 261 residues: Cytochrome c oxidase subunit 3 (261 aa).

Residues 1–15 lie on the Mitochondrial matrix side of the membrane; that stretch reads MTHQTHAYHMVNPSP. A helical transmembrane segment spans residues 16 to 34; sequence WPLTGALSALLMTSGLIMW. Residues 35 to 40 are Mitochondrial intermembrane-facing; that stretch reads FHFNSV. The helical transmembrane segment at 41–66 threads the bilayer; sequence ALLMLGLTTNMLTMYQWWRDVIREST. The Mitochondrial matrix portion of the chain corresponds to 67–72; it reads FQGHHT. Residues 73–105 form a helical membrane-spanning segment; it reads PNVQKGLRYGMILFIISEVLFFTGFFWAFYHSS. The Mitochondrial intermembrane portion of the chain corresponds to 106–128; the sequence is LAPTPELGGCWPPTGIHPLNPLE. The chain crosses the membrane as a helical span at residues 129–152; sequence VPLLNTSVLLASGVSITWAHHSLM. Residues 153–155 are Mitochondrial matrix-facing; that stretch reads EGN. Residues 156-183 traverse the membrane as a helical segment; the sequence is RNHMLQALFITIALGVYFTLLQASEYYE. The Mitochondrial intermembrane portion of the chain corresponds to 184–190; that stretch reads APFTISD. The helical transmembrane segment at 191 to 223 threads the bilayer; it reads GVYGSTFFVATGFHGLHVIIGSTFLIVCFFRQL. Residues 224–232 are Mitochondrial matrix-facing; that stretch reads KFHFTSSHH. Residues 233 to 256 traverse the membrane as a helical segment; the sequence is FGFEAAAWYWHFVDVVWLFLYVSI. Over 257 to 261 the chain is Mitochondrial intermembrane; that stretch reads YWWGS.

It belongs to the cytochrome c oxidase subunit 3 family. In terms of assembly, component of the cytochrome c oxidase (complex IV, CIV), a multisubunit enzyme composed of 14 subunits. The complex is composed of a catalytic core of 3 subunits MT-CO1, MT-CO2 and MT-CO3, encoded in the mitochondrial DNA, and 11 supernumerary subunits COX4I, COX5A, COX5B, COX6A, COX6B, COX6C, COX7A, COX7B, COX7C, COX8 and NDUFA4, which are encoded in the nuclear genome. The complex exists as a monomer or a dimer and forms supercomplexes (SCs) in the inner mitochondrial membrane with NADH-ubiquinone oxidoreductase (complex I, CI) and ubiquinol-cytochrome c oxidoreductase (cytochrome b-c1 complex, complex III, CIII), resulting in different assemblies (supercomplex SCI(1)III(2)IV(1) and megacomplex MCI(2)III(2)IV(2)).

Its subcellular location is the mitochondrion inner membrane. It catalyses the reaction 4 Fe(II)-[cytochrome c] + O2 + 8 H(+)(in) = 4 Fe(III)-[cytochrome c] + 2 H2O + 4 H(+)(out). In terms of biological role, component of the cytochrome c oxidase, the last enzyme in the mitochondrial electron transport chain which drives oxidative phosphorylation. The respiratory chain contains 3 multisubunit complexes succinate dehydrogenase (complex II, CII), ubiquinol-cytochrome c oxidoreductase (cytochrome b-c1 complex, complex III, CIII) and cytochrome c oxidase (complex IV, CIV), that cooperate to transfer electrons derived from NADH and succinate to molecular oxygen, creating an electrochemical gradient over the inner membrane that drives transmembrane transport and the ATP synthase. Cytochrome c oxidase is the component of the respiratory chain that catalyzes the reduction of oxygen to water. Electrons originating from reduced cytochrome c in the intermembrane space (IMS) are transferred via the dinuclear copper A center (CU(A)) of subunit 2 and heme A of subunit 1 to the active site in subunit 1, a binuclear center (BNC) formed by heme A3 and copper B (CU(B)). The BNC reduces molecular oxygen to 2 water molecules using 4 electrons from cytochrome c in the IMS and 4 protons from the mitochondrial matrix. The protein is Cytochrome c oxidase subunit 3 (MT-CO3) of Nanger granti (Grant's gazelle).